The primary structure comprises 316 residues: Acetaldehyde dehydrogenase (316 aa).

11-14 (SGNI) provides a ligand contact to NAD(+). The active-site Acyl-thioester intermediate is the C131. Residues 162–170 (SAGPGTRAN) and N289 contribute to the NAD(+) site.

It belongs to the acetaldehyde dehydrogenase family. Interacts with MhpE.

The catalysed reaction is acetaldehyde + NAD(+) + CoA = acetyl-CoA + NADH + H(+). It functions in the pathway aromatic compound metabolism; 3-phenylpropanoate degradation. Functionally, catalyzes the conversion of acetaldehyde to acetyl-CoA, using NAD(+) and coenzyme A. Is the final enzyme in the meta-cleavage pathway for the degradation of aromatic compounds. The protein is Acetaldehyde dehydrogenase of Shigella sonnei (strain Ss046).